An 86-amino-acid chain; its full sequence is Small ribosomal subunit protein bS20 (86 aa).

The span at 1–27 shows a compositional bias: basic residues; that stretch reads MANSKSAKKRATQAERRRQHNASRRSM. The disordered stretch occupies residues 1 to 28; it reads MANSKSAKKRATQAERRRQHNASRRSMM.

It belongs to the bacterial ribosomal protein bS20 family.

Binds directly to 16S ribosomal RNA. The chain is Small ribosomal subunit protein bS20 from Aliivibrio salmonicida (strain LFI1238) (Vibrio salmonicida (strain LFI1238)).